Consider the following 100-residue polypeptide: Large ribosomal subunit protein uL23 (100 aa).

Belongs to the universal ribosomal protein uL23 family. Part of the 50S ribosomal subunit. Contacts protein L29, and trigger factor when it is bound to the ribosome.

Functionally, one of the early assembly proteins it binds 23S rRNA. One of the proteins that surrounds the polypeptide exit tunnel on the outside of the ribosome. Forms the main docking site for trigger factor binding to the ribosome. The polypeptide is Large ribosomal subunit protein uL23 (Mycolicibacterium vanbaalenii (strain DSM 7251 / JCM 13017 / BCRC 16820 / KCTC 9966 / NRRL B-24157 / PYR-1) (Mycobacterium vanbaalenii)).